Consider the following 226-residue polypeptide: Ribonuclease HII (226 aa).

An RNase H type-2 domain is found at 29–220 (GPVAGVDEAG…VAALLHRVDN (192 aa)). Positions 35, 36, and 129 each coordinate a divalent metal cation.

Belongs to the RNase HII family. It depends on Mn(2+) as a cofactor. The cofactor is Mg(2+).

The protein localises to the cytoplasm. The catalysed reaction is Endonucleolytic cleavage to 5'-phosphomonoester.. In terms of biological role, endonuclease that specifically degrades the RNA of RNA-DNA hybrids. The sequence is that of Ribonuclease HII from Rhodococcus opacus (strain B4).